The primary structure comprises 353 residues: Quinolinate synthase (353 aa).

Iminosuccinate-binding residues include His47 and Ser68. Position 113 (Cys113) interacts with [4Fe-4S] cluster. Residues 139–141 (YAN) and Ser156 each bind iminosuccinate. Cys200 is a [4Fe-4S] cluster binding site. Residues 226-228 (HPE) and Thr243 each bind iminosuccinate. Cys297 is a [4Fe-4S] cluster binding site.

The protein belongs to the quinolinate synthase family. Type 1 subfamily. [4Fe-4S] cluster serves as cofactor.

The protein resides in the cytoplasm. It catalyses the reaction iminosuccinate + dihydroxyacetone phosphate = quinolinate + phosphate + 2 H2O + H(+). It participates in cofactor biosynthesis; NAD(+) biosynthesis; quinolinate from iminoaspartate: step 1/1. In terms of biological role, catalyzes the condensation of iminoaspartate with dihydroxyacetone phosphate to form quinolinate. The sequence is that of Quinolinate synthase from Yersinia pestis bv. Antiqua (strain Antiqua).